A 249-amino-acid chain; its full sequence is Uridylate kinase (249 aa).

16 to 19 (KLSG) serves as a coordination point for ATP. G57 is a binding site for UMP. Residues G58 and R62 each contribute to the ATP site. Residues D77 and 138–145 (AGMPYFST) contribute to the UMP site. 3 residues coordinate ATP: N166, Y172, and D175.

The protein belongs to the UMP kinase family. Homohexamer.

It is found in the cytoplasm. It carries out the reaction UMP + ATP = UDP + ADP. The protein operates within pyrimidine metabolism; CTP biosynthesis via de novo pathway; UDP from UMP (UMPK route): step 1/1. Inhibited by UTP. Catalyzes the reversible phosphorylation of UMP to UDP. The polypeptide is Uridylate kinase (Bifidobacterium adolescentis (strain ATCC 15703 / DSM 20083 / NCTC 11814 / E194a)).